The sequence spans 199 residues: Recombination protein RecR (199 aa).

The C4-type zinc-finger motif lies at Cys57 to Cys72. Residues Ser81–Pro176 enclose the Toprim domain.

This sequence belongs to the RecR family.

Its function is as follows. May play a role in DNA repair. It seems to be involved in an RecBC-independent recombinational process of DNA repair. It may act with RecF and RecO. The polypeptide is Recombination protein RecR (Shewanella sp. (strain ANA-3)).